A 718-amino-acid chain; its full sequence is MAEYLRLPHSLAMIRLCNPPVNAISPTVITEVRNGLQKASLDHTVRAIVICGANDNFCAGADIHGFKSPTGLTLGSLVDEIQRYQKPVVAAIQGVALGGGLELALGCHYRIANAKARVGFPEVMLGILPGARGTQLLPRVVGVPVALDLITSGRHISTDEALKLGILDVVVKSDPVEEAIKFAQTVIGKPIEPRRILNKPVPSLPNMDSVFAEAIAKVRKQYPGRLAPETCVRSVQASVKHPYEVAIKEEAKLFMYLRGSGQARALQYAFFAEKSANKWSTPSGASWKTASAQPVSSVGVLGLGTMGRGIAISFARVGIPVVAVESDPKQLDTAKKIITSTLEKEASKSGQASAKPNLRFSSSTKELSSVDLVIEAVFEDMNLKKKVFAELSALCKPGAFLCTNTSALDVDDIASSTDRPQLVIGTHFFSPAHIMRLLEVIPSRYSSPTTIATVMSLSKRIGKIGVVVGNCYGFVGNRMLAPYYNQGYFLIEEGSKPEDVDGVLEEFGFRMGPFRVSDLAGLDVGWKVRKGQGLTGPSLPPGTPTRKRGNTRYSPIADMLCEAGRFGQKTGKGWYQYDKPLGRIHKPDPWLSEFLSQYRETHHIKQRSISKEEILERCLYSLINEAFRILEEGMAASPEHIDVIYLHGYGWPRHVGGPMYYAASVGLPTVLEKLQKYYRQNPDIPQLEPSDYLRRLVAQGSPPLKEWQSLAGPHSSKL.

The segment at 1-280 (MAEYLRLPHS…FAEKSANKWS (280 aa)) is enoyl-CoA hydratase / isomerase. Lysine 38 is modified (N6-succinyllysine). Substrate is bound at residue glycine 99. 2 positions are modified to N6-acetyllysine; alternate: lysine 163 and lysine 172. 2 positions are modified to N6-succinyllysine; alternate: lysine 163 and lysine 172. Position 181 is an N6-succinyllysine (lysine 181). N6-acetyllysine; alternate is present on residues lysine 189 and lysine 217. N6-succinyllysine; alternate occurs at positions 189 and 217. Lysine 240 bears the N6-succinyllysine mark. Lysine 248 carries the N6-acetyllysine modification. At lysine 252 the chain carries N6-succinyllysine. Lysine 274 carries the N6-acetyllysine; alternate modification. Lysine 274 carries the N6-succinyllysine; alternate modification. Lysine 278, lysine 288, and lysine 329 each carry N6-succinyllysine. The interval 281–567 (TPSGASWKTA…DMLCEAGRFG (287 aa)) is 3-hydroxyacyl-CoA dehydrogenase. Residues lysine 344, lysine 348, lysine 355, and lysine 459 each carry the N6-acetyllysine modification. Lysine 527 carries the N6-succinyllysine modification. Residue threonine 543 is modified to Phosphothreonine. Lysine 572 is subject to N6-succinyllysine. N6-acetyllysine; alternate is present on residues lysine 579, lysine 586, and lysine 705. N6-succinyllysine; alternate is present on residues lysine 579, lysine 586, and lysine 705. A Microbody targeting signal motif is present at residues 716 to 718 (SKL). Lysine 717 bears the N6-succinyllysine mark.

This sequence in the N-terminal section; belongs to the enoyl-CoA hydratase/isomerase family. In the C-terminal section; belongs to the 3-hydroxyacyl-CoA dehydrogenase family. As to quaternary structure, monomer. Acetylated, leading to enhanced enzyme activity. Acetylation is enhanced by up to 80% after treatment either with trichostin A (TCA) or with nicotinamide (NAM) with highest increase on Lys-344. Acetylation and enzyme activity increased by about 1.5% on addition of fatty acids.

It is found in the peroxisome. The enzyme catalyses a (3S)-3-hydroxyacyl-CoA = a (2E)-enoyl-CoA + H2O. The catalysed reaction is a 4-saturated-(3S)-3-hydroxyacyl-CoA = a (3E)-enoyl-CoA + H2O. It carries out the reaction a (3Z)-enoyl-CoA = a 4-saturated (2E)-enoyl-CoA. It catalyses the reaction a (3E)-enoyl-CoA = a 4-saturated (2E)-enoyl-CoA. The enzyme catalyses a (3S)-3-hydroxyacyl-CoA + NAD(+) = a 3-oxoacyl-CoA + NADH + H(+). The catalysed reaction is (2S,3S)-3-hydroxy-2-methylbutanoyl-CoA = (2E)-2-methylbut-2-enoyl-CoA + H2O. It carries out the reaction (2E)-dodecenedioyl-CoA + H2O = (3S)-hydroxydodecanedioyl-CoA. It catalyses the reaction (3S)-hydroxydodecanedioyl-CoA + NAD(+) = 3-oxododecanedioyl-CoA + NADH + H(+). The enzyme catalyses (2E)-octenedioyl-CoA + H2O = (3S)-hydroxyoctanedioyl-CoA. The catalysed reaction is (3S)-hydroxyoctanedioyl-CoA + NAD(+) = 3-oxooctanedioyl-CoA + NADH + H(+). It carries out the reaction (2E)-decenedioyl-CoA + H2O = (3S)-hydroxydecanedioyl-CoA. It catalyses the reaction (3S)-hydroxydecanedioyl-CoA + NAD(+) = 3-oxodecanedioyl-CoA + NADH + H(+). The enzyme catalyses (2E)-tetradecenedioyl-CoA + H2O = (3S)-hydroxytetradecanedioyl-CoA. The catalysed reaction is (3S)-hydroxytetradecanedioyl-CoA + NAD(+) = 3-oxotetradecanedioyl-CoA + NADH + H(+). It carries out the reaction (3E,5Z)-tetradecadienoyl-CoA = (2E,5Z)-tetradecadienoyl-CoA. It catalyses the reaction (3E,5Z)-octadienoyl-CoA = (2E,5Z)-octadienoyl-CoA. The enzyme catalyses (3S)-hydroxydecanoyl-CoA + NAD(+) = 3-oxodecanoyl-CoA + NADH + H(+). The catalysed reaction is (3E)-decenoyl-CoA = (2E)-decenoyl-CoA. It carries out the reaction (3Z)-hexenoyl-CoA = (2E)-hexenoyl-CoA. It catalyses the reaction (3E)-hexenoyl-CoA = (2E)-hexenoyl-CoA. The enzyme catalyses (3S)-hydroxydecanoyl-CoA = (2E)-decenoyl-CoA + H2O. The catalysed reaction is (3S)-hydroxyhexanoyl-CoA = (2E)-hexenoyl-CoA + H2O. It carries out the reaction (3S)-hydroxyhexadecanoyl-CoA + NAD(+) = 3-oxohexadecanoyl-CoA + NADH + H(+). It catalyses the reaction (3S)-hydroxyhexadecanoyl-CoA = (2E)-hexadecenoyl-CoA + H2O. The enzyme catalyses (2E)-hexadecenedioyl-CoA + H2O = (3S)-hydroxyhexadecanedioyl-CoA. The catalysed reaction is (3S)-hydroxyhexadecanedioyl-CoA + NAD(+) = 3-oxohexadecanedioyl-CoA + NADH + H(+). It functions in the pathway lipid metabolism; fatty acid beta-oxidation. Its activity is regulated as follows. Enzyme activity enhanced by acetylation. In terms of biological role, peroxisomal trifunctional enzyme possessing 2-enoyl-CoA hydratase, 3-hydroxyacyl-CoA dehydrogenase, and delta 3, delta 2-enoyl-CoA isomerase activities. Catalyzes two of the four reactions of the long chain fatty acids peroxisomal beta-oxidation pathway. Can also use branched-chain fatty acids such as 2-methyl-2E-butenoyl-CoA as a substrate, which is hydrated into (2S,3S)-3-hydroxy-2-methylbutanoyl-CoA. Optimal isomerase for 2,5 double bonds into 3,5 form isomerization in a range of enoyl-CoA species. Also able to isomerize both 3-cis and 3-trans double bonds into the 2-trans form in a range of enoyl-CoA species. With HSD17B4, catalyzes the hydration of trans-2-enoyl-CoA and the dehydrogenation of 3-hydroxyacyl-CoA, but with opposite chiral specificity. Regulates the amount of medium-chain dicarboxylic fatty acids which are essential regulators of all fatty acid oxidation pathways. Also involved in the degradation of long-chain dicarboxylic acids through peroxisomal beta-oxidation. The chain is Peroxisomal bifunctional enzyme from Mus musculus (Mouse).